The primary structure comprises 213 residues: Receptor-binding cancer antigen expressed on SiSo cells (213 aa).

The Extracellular segment spans residues 1–6 (MAITQF). Residues 7 to 27 (RLFKVCTCLATVLSFLKRLIC) form a helical; Signal-anchor for type III membrane protein membrane-spanning segment. Topologically, residues 28 to 213 (RSGRGRKLSG…EQNKMGVKLS (186 aa)) are cytoplasmic. Ser-36 carries the phosphoserine modification. Thr-41 is subject to Phosphothreonine. Tyr-94 carries the phosphotyrosine modification. Residues 168-209 (QAEEVLRQQKIADREKRAAEQQRKKMEKEAQRLLKKEQNKMG) are a coiled coil. The span at 179–206 (ADREKRAAEQQRKKMEKEAQRLLKKEQN) shows a compositional bias: basic and acidic residues. The interval 179–213 (ADREKRAAEQQRKKMEKEAQRLLKKEQNKMGVKLS) is disordered.

In terms of assembly, homodimer.

Its subcellular location is the golgi apparatus membrane. In terms of biological role, may participate in suppression of cell proliferation and induces apoptotic cell death through activation of interleukin-1-beta converting enzyme (ICE)-like proteases. This Rattus norvegicus (Rat) protein is Receptor-binding cancer antigen expressed on SiSo cells (Ebag9).